Here is a 571-residue protein sequence, read N- to C-terminus: DM7 family protein CG15332 (571 aa).

The disordered stretch occupies residues 440–472 (TRDDGINTADYQSQFPELEPEPEPEPEDEGEDV). Residues 457-471 (LEPEPEPEPEDEGED) show a composition bias toward acidic residues.

This sequence belongs to the DM7 family.

The sequence is that of DM7 family protein CG15332 from Drosophila melanogaster (Fruit fly).